Consider the following 312-residue polypeptide: Aspartate carbamoyltransferase catalytic subunit (312 aa).

Positions 58 and 59 each coordinate carbamoyl phosphate. Residue Lys-86 coordinates L-aspartate. Carbamoyl phosphate-binding residues include Arg-108, His-136, and Gln-139. 2 residues coordinate L-aspartate: Arg-169 and Arg-223. Residues Gly-264 and Pro-265 each contribute to the carbamoyl phosphate site.

Belongs to the aspartate/ornithine carbamoyltransferase superfamily. ATCase family. Heterododecamer (2C3:3R2) of six catalytic PyrB chains organized as two trimers (C3), and six regulatory PyrI chains organized as three dimers (R2).

It catalyses the reaction carbamoyl phosphate + L-aspartate = N-carbamoyl-L-aspartate + phosphate + H(+). It participates in pyrimidine metabolism; UMP biosynthesis via de novo pathway; (S)-dihydroorotate from bicarbonate: step 2/3. Its function is as follows. Catalyzes the condensation of carbamoyl phosphate and aspartate to form carbamoyl aspartate and inorganic phosphate, the committed step in the de novo pyrimidine nucleotide biosynthesis pathway. This chain is Aspartate carbamoyltransferase catalytic subunit, found in Acetivibrio thermocellus (strain ATCC 27405 / DSM 1237 / JCM 9322 / NBRC 103400 / NCIMB 10682 / NRRL B-4536 / VPI 7372) (Clostridium thermocellum).